Consider the following 90-residue polypeptide: MKLPIIFLTLLIFVSSCTSTLINGSSDEERTYSFSPTTSPFDPRSLNQELKIGRIGYCFDCARACMRRGKYIRTCSFERKLCRCSISDIK.

Residues 1-19 form the signal peptide; that stretch reads MKLPIIFLTLLIFVSSCTS. N-linked (GlcNAc...) asparagine glycosylation occurs at Asn-23. 3 disulfides stabilise this stretch: Cys-58–Cys-75, Cys-61–Cys-82, and Cys-65–Cys-84. Residues 67–87 are PRK6 binding; that stretch reads RRGKYIRTCSFERKLCRCSIS.

It belongs to the DEFL family. Interacts with MDIS1, MIK1, MIK2 and TDR/PXY, but not with MDIS2. Binds to PRK6 LRRs. As to expression, expressed in the pistil. Detected exclusively in the synergid cells.

It localises to the secreted. Its function is as follows. Pollen tube attractants guiding pollen tubes to the ovular micropyle. Attracts specifically pollen tubes from A.thaliana, but not those from A.lyrata. Triggers endocytosis of MDIS1 in the pollen tube tip. The protein is Protein LURE 1.2 of Arabidopsis thaliana (Mouse-ear cress).